A 208-amino-acid polypeptide reads, in one-letter code: Protein GrpE (208 aa).

Positions 1–25 (MVDNKDFNEELKENIQEELDNETKA) are enriched in basic and acidic residues. Residues 1 to 38 (MVDNKDFNEELKENIQEELDNETKAENPNIDEEVEEVS) form a disordered region. The segment covering 29–38 (NIDEEVEEVS) has biased composition (acidic residues).

It belongs to the GrpE family. Homodimer.

It localises to the cytoplasm. Its function is as follows. Participates actively in the response to hyperosmotic and heat shock by preventing the aggregation of stress-denatured proteins, in association with DnaK and GrpE. It is the nucleotide exchange factor for DnaK and may function as a thermosensor. Unfolded proteins bind initially to DnaJ; upon interaction with the DnaJ-bound protein, DnaK hydrolyzes its bound ATP, resulting in the formation of a stable complex. GrpE releases ADP from DnaK; ATP binding to DnaK triggers the release of the substrate protein, thus completing the reaction cycle. Several rounds of ATP-dependent interactions between DnaJ, DnaK and GrpE are required for fully efficient folding. This chain is Protein GrpE, found in Clostridium perfringens (strain 13 / Type A).